Here is a 239-residue protein sequence, read N- to C-terminus: Fatty acid metabolism regulator protein (239 aa).

The 69-residue stretch at 6–74 (QSPAGFAEEY…HGKPTKVNNF (69 aa)) folds into the HTH gntR-type domain. Residues 34–53 (ERELSELIGVTRTTLREVLQ) constitute a DNA-binding region (H-T-H motif).

In terms of assembly, homodimer.

It is found in the cytoplasm. Functionally, multifunctional regulator of fatty acid metabolism. The sequence is that of Fatty acid metabolism regulator protein from Enterobacter sp. (strain 638).